Consider the following 854-residue polypeptide: DNA mismatch repair protein MutS (854 aa).

Residues 1–21 (MTASDIQPTEPHTPPTPHADT) are disordered. ATP is bound at residue 658–665 (GPNASGKS).

This sequence belongs to the DNA mismatch repair MutS family.

Its function is as follows. This protein is involved in the repair of mismatches in DNA. It is possible that it carries out the mismatch recognition step. This protein has a weak ATPase activity. This chain is DNA mismatch repair protein MutS, found in Trichormus variabilis (strain ATCC 29413 / PCC 7937) (Anabaena variabilis).